We begin with the raw amino-acid sequence, 220 residues long: UPF0502 protein Pnap_3223 (220 aa).

This sequence belongs to the UPF0502 family.

This Polaromonas naphthalenivorans (strain CJ2) protein is UPF0502 protein Pnap_3223.